Consider the following 189-residue polypeptide: Segregation and condensation protein B (189 aa).

It belongs to the ScpB family. Homodimer. Homodimerization may be required to stabilize the binding of ScpA to the Smc head domains. Component of a cohesin-like complex composed of ScpA, ScpB and the Smc homodimer, in which ScpA and ScpB bind to the head domain of Smc. The presence of the three proteins is required for the association of the complex with DNA.

The protein resides in the cytoplasm. Its function is as follows. Participates in chromosomal partition during cell division. May act via the formation of a condensin-like complex containing Smc and ScpA that pull DNA away from mid-cell into both cell halves. The sequence is that of Segregation and condensation protein B from Streptococcus sanguinis (strain SK36).